Here is a 220-residue protein sequence, read N- to C-terminus: uncharacterized protein (220 aa).

The stretch at 165-202 (DKYEDLISDYNKIMEKYREVIKSEIEKYKALSKRKNDI) forms a coiled coil.

This is an uncharacterized protein from Pasteurella multocida (strain Pm70).